A 618-amino-acid chain; its full sequence is Grainyhead-like protein 1 homolog (618 aa).

The interval 1–91 (MTQEYDNKRP…EGEHPEPEHS (91 aa)) is transcription activation. Residues 76 to 92 (SSAVKPEGEHPEPEHSK) show a composition bias toward basic and acidic residues. Residues 76-100 (SSAVKPEGEHPEPEHSKRNSIPNVT) are disordered. Thr-208 is subject to Phosphothreonine. In terms of domain architecture, Grh/CP2 DB spans 248–474 (SGNNFEYTLE…DLDTQPVLFI (227 aa)). 2 interaction with DNA regions span residues 380–389 (TDFSSQKGVK) and 427–430 (RKIR).

It belongs to the grh/CP2 family. Grainyhead subfamily. In terms of assembly, binds DNA as homodimer. Homodimer, also forms heterodimers with GRHL2 or GRHL3. Post-translationally, methylation at Arg-9 and Lys-116 may be involved in regulating transcriptional activation. Isoform 1 is highly expressed in brain, pancreas, tonsil, placenta and kidney. Isoform 2 is highly expressed in brain and liver. Expression in the skin is confined to the suprabasal layers of the epidermis and to the hair follicles.

Its subcellular location is the nucleus. Functionally, transcription factor involved in epithelial development. Binds directly to the consensus DNA sequence 5'-AACCGGTT-3'. Important regulator of DSG1 in the context of hair anchorage and epidermal differentiation, participates in the maintenance of the skin barrier. There is no genetic interaction with GRHL3, nor functional cooperativity due to diverse target gene selectivity during epithelia development. May play a role in regulating glucose homeostasis and insulin signaling. This chain is Grainyhead-like protein 1 homolog, found in Mus musculus (Mouse).